We begin with the raw amino-acid sequence, 210 residues long: PEYTIIYFNARGRCEAMRMLMADQGAQWKEEVVTSDDWQKGDLKKAAVYGQLPGFKDGDFTLYQSNAMLRLLARNHDLYGKNPREASLIDMVNDGVEDLRLKYLKMIYQNYENGKDDYVKALPTNLGHFERLLASNNEGKGFVVGAHISFADYNLVDLLHNHLVLAPDCLSGFPLLCAYVKRISSRPKLEAYLSSDAHKKRPINGNGKQQ.

Residues 1–80 (PEYTIIYFNA…LLARNHDLYG (80 aa)) enclose the GST N-terminal domain. Residues Tyr-7, Arg-13, Trp-38, Lys-44, 51–52 (QL), and 64–65 (QS) each bind glutathione. In terms of domain architecture, GST C-terminal spans 82–203 (NPREASLIDM…SSDAHKKRPI (122 aa)).

The protein belongs to the GST superfamily. Pi family. As to quaternary structure, homodimer.

The protein localises to the cytoplasm. Its subcellular location is the mitochondrion. The protein resides in the nucleus. The catalysed reaction is RX + glutathione = an S-substituted glutathione + a halide anion + H(+). Conjugation of reduced glutathione to a wide number of exogenous and endogenous hydrophobic electrophiles. In Bufo bufo (European toad), this protein is Glutathione S-transferase P 1.